A 1193-amino-acid polypeptide reads, in one-letter code: Probable DNA-directed RNA polymerase II subunit RPB2 homolog (1193 aa).

Asp-808 lines the Mg(2+) pocket. Zn(2+) contacts are provided by Cys-1137, Cys-1140, Cys-1155, and Cys-1158. The segment at 1137 to 1158 adopts a C4-type zinc-finger fold; that stretch reads CVPCKSYFKVVKTQNGFFCSGC.

Belongs to the RNA polymerase beta chain family.

The enzyme catalyses RNA(n) + a ribonucleoside 5'-triphosphate = RNA(n+1) + diphosphate. Component of the DNA-dependent RNA polymerase that catalyzes the transcription of DNA into RNA using the four ribonucleoside triphosphates as substrates. Second largest component of RNA polymerase II which synthesizes mRNA precursors and many functional non-coding RNAs. Proposed to contribute to the polymerase catalytic activity and forms the polymerase active center together with the largest subunit. In Invertebrate iridescent virus 6 (IIV-6), this protein is Probable DNA-directed RNA polymerase II subunit RPB2 homolog.